Consider the following 639-residue polypeptide: Serine/threonine-protein kinase PAK mbt (639 aa).

Residues I11 to G24 form the CRIB domain. Residues F25–N367 are linker. Disordered regions lie at residues H79–Y195 and R222–R345. Composition is skewed to low complexity over residues N91–G129, V138–P159, P227–P241, and Q274–H295. The span at P296 to L308 shows a compositional bias: basic residues. A compositionally biased stretch (low complexity) spans A309–G331. The Protein kinase domain occupies L368 to L619. Residues I374–V382 and K397 contribute to the ATP site. D487 functions as the Proton acceptor in the catalytic mechanism. S521 bears the Phosphoserine mark. Residue T525 is modified to Phosphothreonine.

This sequence belongs to the protein kinase superfamily. STE Ser/Thr protein kinase family. STE20 subfamily. Interacts tightly with GTP-bound but not GDP-bound Cdc42 and weakly with Rac1. Mg(2+) is required as a cofactor. In terms of processing, autophosphorylated when activated by Cdc42. Expressed in adult brain and eye. High levels detected in developing photoreceptor cells and future bristle cells, and lower levels in cone and pigment cells, as detected in third instar eye imaginal disks (at protein level).

The protein resides in the cell junction. It is found in the adherens junction. It localises to the cell membrane. It carries out the reaction L-seryl-[protein] + ATP = O-phospho-L-seryl-[protein] + ADP + H(+). The enzyme catalyses L-threonyl-[protein] + ATP = O-phospho-L-threonyl-[protein] + ADP + H(+). Its function is as follows. Involved in neurogenesis of the adult central nervous system, and together with Cdc42, regulates photoreceptor cell morphogenesis. Phosphorylates exogenous substrates when activated by Cdc42. This Drosophila melanogaster (Fruit fly) protein is Serine/threonine-protein kinase PAK mbt.